The following is a 476-amino-acid chain: tRNA(Ile)-lysidine synthase (476 aa).

30-35 (SGGPDS) is an ATP binding site.

The protein belongs to the tRNA(Ile)-lysidine synthase family.

The protein resides in the cytoplasm. The catalysed reaction is cytidine(34) in tRNA(Ile2) + L-lysine + ATP = lysidine(34) in tRNA(Ile2) + AMP + diphosphate + H(+). Functionally, ligates lysine onto the cytidine present at position 34 of the AUA codon-specific tRNA(Ile) that contains the anticodon CAU, in an ATP-dependent manner. Cytidine is converted to lysidine, thus changing the amino acid specificity of the tRNA from methionine to isoleucine. This Bacillus cereus (strain ATCC 14579 / DSM 31 / CCUG 7414 / JCM 2152 / NBRC 15305 / NCIMB 9373 / NCTC 2599 / NRRL B-3711) protein is tRNA(Ile)-lysidine synthase.